The chain runs to 805 residues: Leucine--tRNA ligase (805 aa).

The short motif at 40–51 (PYPSGSGLHVGH) is the 'HIGH' region element. A 'KMSKS' region motif is present at residues 576 to 580 (KMSKS). Lysine 579 is a binding site for ATP.

This sequence belongs to the class-I aminoacyl-tRNA synthetase family.

It is found in the cytoplasm. The catalysed reaction is tRNA(Leu) + L-leucine + ATP = L-leucyl-tRNA(Leu) + AMP + diphosphate. This is Leucine--tRNA ligase from Chlorobium luteolum (strain DSM 273 / BCRC 81028 / 2530) (Pelodictyon luteolum).